The following is a 345-amino-acid chain: Olfactory receptor 11G2 (345 aa).

Residues 1 to 62 (MHFLSQNDLN…LGFPCPREGQ (62 aa)) are Extracellular-facing. N43 is a glycosylation site (N-linked (GlcNAc...) asparagine). A helical transmembrane segment spans residues 63–83 (ILLFVLFTVVYLLTLMGNGSI). Over 84 to 92 (ICAVHWDQR) the chain is Cytoplasmic. Residues 93 to 113 (LHAPMYILLANFSFLEICYVT) traverse the membrane as a helical segment. Residues 114–135 (STVPSMLANFLSDTKIISFSGC) are Extracellular-facing. C135 and C217 form a disulfide bridge. The helical transmembrane segment at 136–156 (FLQFYFFFSLGSTECFFLAVM) threads the bilayer. The Cytoplasmic segment spans residues 157–181 (AFDRYLAICRPLRYPTIMTRRLCTN). A helical transmembrane segment spans residues 182-202 (LVVNCWVLGFIWFLIPIVNIS). Over 203-241 (QMSFCGSRIIDHFLCDPAPLLTLTCKKGPVIELVFSVLS) the chain is Extracellular. Residues 242-264 (PLPVFMLFLFIVGSYALVVRAVL) form a helical membrane-spanning segment. At 265–275 (RVPSAAGRRKA) the chain is on the cytoplasmic side. A helical transmembrane segment spans residues 276–296 (FSTCGSHLAVVSLFYGSVLVM). Topologically, residues 297–309 (YGSPPSKNEAGKQ) are extracellular. Residues 310–330 (KTVTLFYSVVTPLLNPVIYSL) traverse the membrane as a helical segment. The Cytoplasmic portion of the chain corresponds to 331-345 (RNKDMRKALKKFWGT).

Belongs to the G-protein coupled receptor 1 family.

Its subcellular location is the cell membrane. Its function is as follows. Odorant receptor. This is Olfactory receptor 11G2 (OR11G2) from Homo sapiens (Human).